Reading from the N-terminus, the 504-residue chain is L-carnitine/gamma-butyrobetaine antiporter (504 aa).

12 helical membrane passes run 8–28, 51–71, 92–112, 143–163, 195–215, 231–251, 263–283, 315–335, 347–367, 403–423, 446–466, and 475–495; these read AGIE…LCWL, WGWA…WLVF, IFMM…SIEI, GPLP…FFFV, FYLV…TPLV, LDAI…AFGL, TYLS…SFIV, AWTV…SIFL, LCLG…TYSG, LSTA…VTLI, LLVR…LLAL, and AIIA…LSFI.

Belongs to the BCCT transporter (TC 2.A.15) family. CaiT subfamily. In terms of assembly, homotrimer.

Its subcellular location is the cell inner membrane. The catalysed reaction is 4-(trimethylamino)butanoate(in) + (R)-carnitine(out) = 4-(trimethylamino)butanoate(out) + (R)-carnitine(in). It participates in amine and polyamine metabolism; carnitine metabolism. Functionally, catalyzes the exchange of L-carnitine for gamma-butyrobetaine. This is L-carnitine/gamma-butyrobetaine antiporter from Proteus sp. (strain LE138).